A 961-amino-acid chain; its full sequence is Phosphofurin acidic cluster sorting protein 1 (961 aa).

Positions 1 to 19 (MAERGGAGGGPGGSGGGSS) are enriched in gly residues. Disordered stretches follow at residues 1-70 (MAER…SSST) and 76-95 (VAVASGSAPPGGPGPGRTPA). Ala-2 carries the post-translational modification N-acetylalanine. The span at 20–34 (QRGSGVAQSPQQQPQ) shows a compositional bias: low complexity. Ser-28 carries the post-translational modification Phosphoserine. Residues 35-46 (QQPPQPQQPTPP) show a composition bias toward pro residues. At Thr-44 the chain carries Phosphothreonine. Residues 51–70 (ATSSSSSTSAAAASSSSSST) are compositionally biased toward low complexity. Tyr-249 carries the post-translational modification Phosphotyrosine. A compositionally biased stretch (basic and acidic residues) spans 260 to 271 (GIKSKLSDRSPD). 2 disordered regions span residues 260–297 (GIKSKLSDRSPDIDNYSEEEEESFSSEQEGSDDPLHGQ) and 375–426 (NPSD…GKDT). A compositionally biased stretch (acidic residues) spans 274 to 291 (NYSEEEEESFSSEQEGSD). Residues 351–375 (HVSREQIREVEEDLDELYDSLEMYN) adopt a coiled-coil conformation. 2 positions are modified to phosphoserine: Ser-377 and Ser-379. The span at 404–426 (MSQSSSQTEIGSLNSKGSLGKDT) shows a compositional bias: polar residues. A phosphoserine mark is found at Ser-428 and Ser-493. 2 disordered regions span residues 475-540 (EKVK…HSTQ) and 758-802 (SPST…SMSS). At Thr-502 the chain carries Phosphothreonine. Residues Ser-517, Ser-526, Ser-527, Ser-529, and Ser-532 each carry the phosphoserine modification. The span at 768 to 802 (SPVVSLTVPSTSPPSSSGLSRDATATPPSSPSMSS) shows a compositional bias: low complexity.

This sequence belongs to the PACS family. As to quaternary structure, associates with AP-1 and AP-3 but not with AP-2 complexes. Interacts with FURIN. Forms a ternary complex with FURIN and AP-1. Interacts with PKD2 (via acidic region). Interacts with SORL1. Interacts with WDR37.

The protein resides in the golgi apparatus. The protein localises to the trans-Golgi network. Functionally, coat protein that is involved in the localization of trans-Golgi network (TGN) membrane proteins that contain acidic cluster sorting motifs. Controls the endosome-to-Golgi trafficking of furin and mannose-6-phosphate receptor by connecting the acidic-cluster-containing cytoplasmic domain of these molecules with the adapter-protein complex-1 (AP-1) of endosomal clathrin-coated membrane pits. Required for normal ER Ca2+ handling in lymphocytes. Together with WDR37, it plays an essential role in lymphocyte development, quiescence and survival. Required for stabilizing peripheral lymphocyte populations. This is Phosphofurin acidic cluster sorting protein 1 (Pacs1) from Mus musculus (Mouse).